Here is a 714-residue protein sequence, read N- to C-terminus: DNA ligase (714 aa).

NAD(+) contacts are provided by residues 47–51 (DAAYD), 96–97 (SL), and Glu130. The active-site N6-AMP-lysine intermediate is Lys132. Residues Arg153, Glu190, Lys306, and Lys330 each contribute to the NAD(+) site. 4 residues coordinate Zn(2+): Cys435, Cys438, Cys453, and Cys459. One can recognise a BRCT domain in the interval 636-714 (RNDSAVAGKT…EDEWLKLIEG (79 aa)).

Belongs to the NAD-dependent DNA ligase family. LigA subfamily. The cofactor is Mg(2+). Mn(2+) is required as a cofactor.

It carries out the reaction NAD(+) + (deoxyribonucleotide)n-3'-hydroxyl + 5'-phospho-(deoxyribonucleotide)m = (deoxyribonucleotide)n+m + AMP + beta-nicotinamide D-nucleotide.. DNA ligase that catalyzes the formation of phosphodiester linkages between 5'-phosphoryl and 3'-hydroxyl groups in double-stranded DNA using NAD as a coenzyme and as the energy source for the reaction. It is essential for DNA replication and repair of damaged DNA. This is DNA ligase from Nitrobacter hamburgensis (strain DSM 10229 / NCIMB 13809 / X14).